Reading from the N-terminus, the 598-residue chain is Probable translation initiation factor IF-2 (598 aa).

Positions 3–225 constitute a tr-type G domain; the sequence is LRCPIVSVLG…GLAQKFLEQK (223 aa). The tract at residues 12–19 is G1; the sequence is GHVDHGKT. 12 to 19 provides a ligand contact to GTP; it reads GHVDHGKT. Positions 37–41 are G2; it reads GITQH. A G3 region spans residues 76 to 79; it reads DTPG. GTP contacts are provided by residues 76-80 and 130-133; these read DTPGH and NKLD. Residues 130 to 133 form a G4 region; sequence NKLD. Positions 200–202 are G5; it reads SAM.

This sequence belongs to the TRAFAC class translation factor GTPase superfamily. Classic translation factor GTPase family. IF-2 subfamily.

Functionally, function in general translation initiation by promoting the binding of the formylmethionine-tRNA to ribosomes. Seems to function along with eIF-2. This Methanococcus maripaludis (strain C6 / ATCC BAA-1332) protein is Probable translation initiation factor IF-2.